The primary structure comprises 145 residues: Large-conductance mechanosensitive channel (145 aa).

A run of 2 helical transmembrane segments spans residues 16 to 36 and 83 to 103; these read VVDL…VTSF and GVFI…FMVI.

The protein belongs to the MscL family. In terms of assembly, homopentamer.

The protein localises to the cell inner membrane. Functionally, channel that opens in response to stretch forces in the membrane lipid bilayer. May participate in the regulation of osmotic pressure changes within the cell. The protein is Large-conductance mechanosensitive channel of Geobacter metallireducens (strain ATCC 53774 / DSM 7210 / GS-15).